Here is an 85-residue protein sequence, read N- to C-terminus: Homeobox protein knotted-1-like 7 (85 aa).

The ELK domain maps to 1–21; the sequence is ELKNELKQGYKEKLVDIREEI. A DNA-binding region (homeobox; TALE-type) is located at residues 22–85; the sequence is MRKRRAGKLP…NQRKRNWHSN (64 aa).

The protein belongs to the TALE/KNOX homeobox family. As to expression, expressed in all tissues examined. Highest expression in leaves.

It localises to the nucleus. This is Homeobox protein knotted-1-like 7 (KNOX7) from Zea mays (Maize).